A 432-amino-acid polypeptide reads, in one-letter code: Ubiquitin-like modifier-activating enzyme 5 (432 aa).

A disordered region spans residues 25-47; it reads ETKKNQTPSVLKGPTVSQERPSA. Polar residues predominate over residues 29–44; the sequence is NQTPSVLKGPTVSQER. Positions 96, 117, 140, 163, and 196 each coordinate ATP. Zn(2+) contacts are provided by cysteine 238 and cysteine 241. Residue cysteine 262 is the Glycyl thioester intermediate of the active site. Residues cysteine 315 and cysteine 320 each coordinate Zn(2+). The interval 363–406 is disordered; the sequence is DTTEAPSSSAATEVAPGLKFAYEPTQTPKKNSSDNLKLSPSQAV. Over residues 386–406 the composition is skewed to polar residues; sequence PTQTPKKNSSDNLKLSPSQAV.

The protein belongs to the ubiquitin-activating E1 family. UBA5 subfamily. Interacts with ufc-1.

E1-like enzyme which activates ufm-1. Required for interaction between ufm-1 and ufc-1. This chain is Ubiquitin-like modifier-activating enzyme 5, found in Caenorhabditis briggsae.